Consider the following 454-residue polypeptide: UPF0210 protein Ppro_0613 (454 aa).

It belongs to the UPF0210 family. In terms of assembly, homodimer.

The protein is UPF0210 protein Ppro_0613 of Pelobacter propionicus (strain DSM 2379 / NBRC 103807 / OttBd1).